A 262-amino-acid polypeptide reads, in one-letter code: Proline-rich protein 23C (262 aa).

Disordered stretches follow at residues 1–52 (MGSR…AGTP) and 225–262 (VPSS…LFQE). Positions 226–242 (PSSPLQPLPPSPSPGPH) are enriched in pro residues. Over residues 243-252 (ARPELPERPP) the composition is skewed to basic and acidic residues. Over residues 253 to 262 (CKVRRRLFQE) the composition is skewed to basic residues.

The protein belongs to the PRR23 family.

This chain is Proline-rich protein 23C (PRR23C), found in Homo sapiens (Human).